A 543-amino-acid chain; its full sequence is Probable protein kinase UbiB (543 aa).

Residues 123–501 form the Protein kinase domain; that stretch reads DFDQQALASA…RVRQGQSRYL (379 aa). ATP contacts are provided by residues 129-137 and Lys152; that span reads LASASIAQV. Asp287 serves as the catalytic Proton acceptor. Transmembrane regions (helical) follow at residues 498–518 and 519–539; these read SRYLFGVGATLLVSGTILLSG and DVEVFPAWLIAAGIVSWVIGW.

Belongs to the ABC1 family. UbiB subfamily.

Its subcellular location is the cell inner membrane. The protein operates within cofactor biosynthesis; ubiquinone biosynthesis [regulation]. In terms of biological role, is probably a protein kinase regulator of UbiI activity which is involved in aerobic coenzyme Q (ubiquinone) biosynthesis. This chain is Probable protein kinase UbiB, found in Serratia proteamaculans (strain 568).